Consider the following 775-residue polypeptide: Polyribonucleotide nucleotidyltransferase (775 aa).

The Mg(2+) site is built by D487 and D493. A KH domain is found at 554 to 613; the sequence is PKVEVVDVPEEKAPLIIGPGGSTVKKIYDETGVKVWVGEQGKVYLFVFPGGDVEKAKQMI. S1 motif domains follow at residues 623-693 and 707-775; these read GAVY…IGIE and GDVY…TDDV.

The protein belongs to the polyribonucleotide nucleotidyltransferase family. Mg(2+) is required as a cofactor.

Its subcellular location is the cytoplasm. It catalyses the reaction RNA(n+1) + phosphate = RNA(n) + a ribonucleoside 5'-diphosphate. In terms of biological role, involved in mRNA degradation. Catalyzes the phosphorolysis of single-stranded polyribonucleotides processively in the 3'- to 5'-direction. In Aquifex aeolicus (strain VF5), this protein is Polyribonucleotide nucleotidyltransferase.